The sequence spans 841 residues: Toll-like receptor 4 (841 aa).

The signal sequence occupies residues 1-23 (MMARARLAAALIPATAILSCLRT). The Extracellular segment spans residues 24-632 (ESWDPCVQVV…FRNATCQLSK (609 aa)). A disulfide bond links cysteine 29 and cysteine 40. N-linked (GlcNAc...) asparagine glycosylation is found at asparagine 35 and asparagine 73. LRR repeat units lie at residues 55–76 (STKM…NFSS), 79–100 (ELQV…TFQG), 103–124 (HLST…AFSG), 127–148 (SLQK…PIGH), 151–172 (NLKE…EYFS), 176–197 (NLEH…DVKV), and 205–225 (NLSL…TFKE). Asparagine 205, asparagine 238, asparagine 282, and asparagine 309 each carry an N-linked (GlcNAc...) asparagine glycan. A disulfide bridge connects residues cysteine 281 and cysteine 306. LRR repeat units follow at residues 352-373 (SLKK…FQLP), 374-394 (SLQY…CSHT), 400-422 (NLKH…MGLE), 423-444 (QLEH…SAFL), 448-469 (NLRY…IFTG), 472-495 (SLQT…FTEL), 497-518 (NLTV…AFHS), 521-542 (SLQV…LYEP), and 545-568 (SLRI…QNLP). Cysteines 390 and 391 form a disulfide. 2 N-linked (GlcNAc...) asparagine glycosylation sites follow: asparagine 497 and asparagine 526. Asparagine 575 is a glycosylation site (N-linked (GlcNAc...) asparagine). The 52-residue stretch at 579–630 (NAFACVCEHQSFLQWVKDQRQLLVGAEQMMCAEPLDMEDMPVLSFRNATCQL) folds into the LRRCT domain. 2 cysteine pairs are disulfide-bonded: cysteine 583–cysteine 609 and cysteine 585–cysteine 628. N-linked (GlcNAc...) asparagine glycosylation is present at asparagine 625. A helical transmembrane segment spans residues 633 to 653 (TIISVSVVTVLLVSVVGVLVY). Over 654-841 (KFYFHLMLLA…TNPQEATTST (188 aa)) the chain is Cytoplasmic. In terms of domain architecture, TIR spans 673–816 (SIYDAFVIYS…VFWRRLRKAL (144 aa)). Positions 820 to 841 (KPQSPEGTADAETNPQEATTST) are disordered. The span at 830-841 (AETNPQEATTST) shows a compositional bias: polar residues.

This sequence belongs to the Toll-like receptor family. As to quaternary structure, belongs to the lipopolysaccharide (LPS) receptor, a multi-protein complex containing at least CD14, LY96 and TLR4. Binding to bacterial LPS leads to homodimerization. Interacts with LY96 via the extracellular domain. Interacts with MYD88 and TIRAP via their respective TIR domains. Interacts with TICAM2. Interacts with NOX4. Interacts with CNPY3 and HSP90B1; this interaction is required for proper folding in the endoplasmic reticulum. Interacts with MAP3K21; this interaction leads to negative regulation of TLR4 signaling. Interacts with CD36, following CD36 stimulation by oxLDL or amyloid-beta 42, and forms a heterodimer with TLR6. The trimeric complex is internalized and triggers inflammatory response. LYN kinase activity facilitates TLR4-TLR6 heterodimerization and signal initiation. Interacts with TICAM1 in response to LPS in a WDFY1-dependent manner. Interacts with WDFY1 in response to LPS. Interacts with SMPDL3B. Interacts with CEACAM1; upon lipopolysaccharide stimulation, forms a complex including TLR4 and the phosphorylated form of SYK and CEACAM1, which in turn, recruits PTPN6 that dephosphorylates SYK, reducing the production of reactive oxygen species (ROS) and lysosome disruption, which in turn, reduces the activity of the inflammasome. Interacts with RFTN1; the interaction occurs in response to lipopolysaccharide stimulation. Interacts with SCIMP; the interaction occurs in response to lipopolysaccharide stimulation and is enhanced by phosphorylation of SCIMP by LYN. This interaction facilitates the phosphorylation of TLR4 by LYN which elicits a selective cytokine response in macrophages. Interacts with TRAF3IP3. Interacts with TREM1; this interaction enhances TLR4-mediated inflammatory response. Interacts with ZG16B/PAUF. Interacts with CD82; this interaction inhibits TLR4-mediated signaling pathway. Phosphorylated on tyrosine residues by LYN after binding lipopolysaccharide. In terms of processing, ubiquitinated by RNF128 via 'Lys-28'-linked polyubiquitin chains, leading to proteasomal degradation.

The protein resides in the cell membrane. Its subcellular location is the early endosome. It is found in the cell projection. The protein localises to the ruffle. Its function is as follows. Transmembrane receptor that functions as a pattern recognition receptor recognizing pathogen- and damage-associated molecular patterns (PAMPs and DAMPs) to induce innate immune responses via downstream signaling pathways. At the plasma membrane, cooperates with LY96 to mediate the innate immune response to bacterial lipopolysaccharide (LPS). Also involved in LPS-independent inflammatory responses triggered by free fatty acids, such as palmitate, and Ni(2+). Mechanistically, acts via MYD88, TIRAP and TRAF6, leading to NF-kappa-B activation, cytokine secretion and the inflammatory response. Alternatively, CD14-mediated TLR4 internalization via endocytosis is associated with the initiation of a MYD88-independent signaling via the TICAM1-TBK1-IRF3 axis leading to type I interferon production. In addition to the secretion of proinflammatory cytokines, initiates the activation of NLRP3 inflammasome and formation of a positive feedback loop between autophagy and NF-kappa-B signaling cascade. In complex with TLR6, promotes inflammation in monocytes/macrophages by associating with TLR6 and the receptor CD86. Upon ligand binding, such as oxLDL or amyloid-beta 42, the TLR4:TLR6 complex is internalized and triggers inflammatory response, leading to NF-kappa-B-dependent production of CXCL1, CXCL2 and CCL9 cytokines, via MYD88 signaling pathway, and CCL5 cytokine, via TICAM1 signaling pathway. In myeloid dendritic cells, vesicular stomatitis virus glycoprotein G but not LPS promotes the activation of IRF7, leading to type I IFN production in a CD14-dependent manner. This chain is Toll-like receptor 4 (TLR4), found in Bos taurus (Bovine).